The sequence spans 410 residues: Regulator of microtubule dynamics protein 2 (410 aa).

A helical membrane pass occupies residues 10–27 (ILGIVVGTAGISLLLLWY). The stretch at 71-109 (RQLQILEKLNELLTHMEELKEEIRVLKEAIPKLEEYIQG) forms a coiled coil. Serine 121 is modified (phosphoserine). The span at 122–131 (PQHRARKRRL) shows a compositional bias: basic residues. The tract at residues 122–153 (PQHRARKRRLATVQSSATSNSSEEAESEGGYV) is disordered. Residue threonine 139 is modified to Phosphothreonine. At tyrosine 152 the chain carries Phosphotyrosine. 2 positions are modified to phosphothreonine: threonine 154 and threonine 157.

The protein belongs to the RMDN family. In terms of assembly, interacts with microtubules.

It localises to the membrane. The protein localises to the cytoplasm. It is found in the cytoskeleton. Its subcellular location is the spindle. The protein resides in the spindle pole. The protein is Regulator of microtubule dynamics protein 2 (RMDN2) of Bos taurus (Bovine).